Consider the following 509-residue polypeptide: uncharacterized protein (509 aa).

It is found in the virion. This is an uncharacterized protein from Acanthamoeba polyphaga mimivirus (APMV).